Consider the following 228-residue polypeptide: Urease accessory protein UreE (228 aa).

A disordered region spans residues 188 to 228 (PLDEPHGSGLHIHAIHSHGDGHSHDHDHSHSHGDHDHDHKH). Residues 204-228 (SHGDGHSHDHDHSHSHGDHDHDHKH) are compositionally biased toward basic and acidic residues.

This sequence belongs to the UreE family.

The protein localises to the cytoplasm. Its function is as follows. Involved in urease metallocenter assembly. Binds nickel. Probably functions as a nickel donor during metallocenter assembly. In Yersinia kristensenii, this protein is Urease accessory protein UreE.